The primary structure comprises 540 residues: Chaperonin GroEL (540 aa).

ATP contacts are provided by residues 29-32, 86-90, glycine 413, 476-478, and aspartate 492; these read TLGP, DGTTT, and NAA.

Belongs to the chaperonin (HSP60) family. Forms a cylinder of 14 subunits composed of two heptameric rings stacked back-to-back. Interacts with the co-chaperonin GroES.

It is found in the cytoplasm. It catalyses the reaction ATP + H2O + a folded polypeptide = ADP + phosphate + an unfolded polypeptide.. Together with its co-chaperonin GroES, plays an essential role in assisting protein folding. The GroEL-GroES system forms a nano-cage that allows encapsulation of the non-native substrate proteins and provides a physical environment optimized to promote and accelerate protein folding. The protein is Chaperonin GroEL of Streptococcus sanguinis.